We begin with the raw amino-acid sequence, 315 residues long: Ectopic P granules protein 4 (315 aa).

6 helical membrane passes run Ile84–Phe104, Ile113–Phe133, Leu146–Leu166, Ile190–Gly210, Ile221–Ser241, and Ile242–Ile262.

It belongs to the EI24 family. As to expression, expressed in pharyngeal and body wall muscles and intestine cells.

The protein resides in the cytoplasm. It is found in the membrane. Involved in autophagy. Thought to act in autophagasome and omegasome formation. The chain is Ectopic P granules protein 4 from Caenorhabditis elegans.